The sequence spans 122 residues: Large ribosomal subunit protein uL14 (122 aa).

The protein belongs to the universal ribosomal protein uL14 family. As to quaternary structure, part of the 50S ribosomal subunit. Forms a cluster with proteins L3 and L19. In the 70S ribosome, L14 and L19 interact and together make contacts with the 16S rRNA in bridges B5 and B8.

In terms of biological role, binds to 23S rRNA. Forms part of two intersubunit bridges in the 70S ribosome. The polypeptide is Large ribosomal subunit protein uL14 (Leuconostoc citreum (strain KM20)).